Reading from the N-terminus, the 106-residue chain is uncharacterized protein (106 aa).

Topologically, residues 1-6 (MYQTSP) are cytoplasmic. Residues 7 to 27 (LSLFYFQVLVPKFLECFLCFP) form a helical membrane-spanning segment. Over 28-32 (YHKIS) the chain is Extracellular. Residues 33 to 53 (LVALLSFFYCQLQTNMIILLS) form a helical membrane-spanning segment. Over 54-73 (QIKRFLYRQIMIALKIKAKK) the chain is Cytoplasmic. The chain crosses the membrane as a helical span at residues 74–94 (FWFIFKYFNVSCDARLFNELF). Residues 95 to 106 (YIFQTYVSVDSK) are Extracellular-facing.

It localises to the membrane. This is an uncharacterized protein from Saccharomyces cerevisiae (strain ATCC 204508 / S288c) (Baker's yeast).